The primary structure comprises 179 residues: Apoptosis regulator Bcl-2 homolog (179 aa).

A BH1 motif is present at residues 76 to 95 (ELFKDLINWGRICGFIVFSA). Positions 126–141 (PWMISHGGQEEFLAFS) match the BH2 motif.

This sequence belongs to the Bcl-2 family. In terms of assembly, interacts with host BECN1 (via BH3 homology domain); this interaction allows the virus to inhibit BECN1, and thus autophagy. Interacts with host BID. Interacts with host BAX.

The protein localises to the host mitochondrion. Its subcellular location is the host endoplasmic reticulum. Suppresses apoptosis in host cell to promote the viral replication. Has the ability to potentially bind to all the members of the proapoptotic Bcl-2 family. Inhibits autophagy by interacting with host Beclin 1 (BECN1). The chain is Apoptosis regulator Bcl-2 homolog from Ornithodoros (relapsing fever ticks).